The primary structure comprises 720 residues: Denticleless protein homolog (720 aa).

WD repeat units follow at residues 43–85 (GMPV…TTKL), 92–131 (AHSNAVFDLAWVPGEHRIVTASGDQTAKVWDVRAGELLGI), and 134–174 (GHQC…KDGF). A DDB1-binding motif motif is present at residues 164–167 (WDTR). The Nuclear localization signal motif lies at 193–200 (PSKLRKKR). 4 WD repeats span residues 211-250 (DFQQSVTVVLLQDEHTLISAGAVDGVIKVWDLRKNYAAYR), 266-305 (TRKLGYSSLVLDSTGANLFANCTDDSIYMFNMTSLKTFPV), 310-351 (GHQN…LPPR), and 355-395 (GHSQ…EEEK). Residues 240-243 (WDLR) carry the DDB1-binding motif motif. Disordered stretches follow at residues 411–437 (KPEEQRGAGRSASPQSTPAKAFSVGSP), 476–495 (PAKLSGASPRTSPKLVPSSK), 528–552 (QSLLETSSTPKAQHSQAEKRAKRRL), and 607–698 (NEHE…TSPK). Positions 528–542 (QSLLETSSTPKAQHS) are enriched in polar residues. 2 stretches are compositionally biased toward basic and acidic residues: residues 543 to 552 (QAEKRAKRRL) and 642 to 660 (CERDSDVVDKENSSPERKN).

The protein belongs to the WD repeat cdt2 family. In terms of assembly, component of the DCX(DTL) E3 ubiquitin ligase complex, at least composed of CUL4 (CUL4A or CUL4B), DDB1, DTL/CDT2 and RBX1.

It is found in the nucleus. Its subcellular location is the cytoplasm. The protein resides in the cytoskeleton. It localises to the microtubule organizing center. The protein localises to the centrosome. It is found in the chromosome. It functions in the pathway protein modification; protein ubiquitination. Functionally, substrate-specific adapter of a DCX (DDB1-CUL4-X-box) E3 ubiquitin-protein ligase complex required for cell cycle control, DNA damage response and translesion DNA synthesis. The DCX(DTL) complex, also named CRL4(CDT2) complex, mediates the polyubiquitination and subsequent degradation of CDT1, CDKN1A/p21(CIP1), KMT5A and SDE2. CDT1 degradation in response to DNA damage is necessary to ensure proper cell cycle regulation of DNA replication. CDKN1A/p21(CIP1) degradation during S phase or following UV irradiation is essential to control replication licensing. KMT5A degradation is also important for a proper regulation of mechanisms such as TGF-beta signaling, cell cycle progression, DNA repair and cell migration. Most substrates require their interaction with PCNA for their polyubiquitination: substrates interact with PCNA via their PIP-box, and those containing the 'K+4' motif in the PIP box, recruit the DCX(DTL) complex, leading to their degradation. In undamaged proliferating cells, the DCX(DTL) complex also promotes the 'Lys-164' monoubiquitination of PCNA, thereby being involved in PCNA-dependent translesion DNA synthesis. May play a role in the regulation of the circadian clock. The chain is Denticleless protein homolog (DTL) from Gallus gallus (Chicken).